Reading from the N-terminus, the 401-residue chain is 8-amino-7-oxononanoate synthase (401 aa).

Arg-19 serves as a coordination point for substrate. A pyridoxal 5'-phosphate-binding site is contributed by 106–107 (GY). A substrate-binding site is contributed by His-131. 3 residues coordinate pyridoxal 5'-phosphate: Ser-176, His-204, and Thr-233. N6-(pyridoxal phosphate)lysine is present on Lys-236. Position 350 (Thr-350) interacts with substrate.

The protein belongs to the class-II pyridoxal-phosphate-dependent aminotransferase family. BioF subfamily. Homodimer. Pyridoxal 5'-phosphate serves as cofactor.

The enzyme catalyses 6-carboxyhexanoyl-[ACP] + L-alanine + H(+) = (8S)-8-amino-7-oxononanoate + holo-[ACP] + CO2. It participates in cofactor biosynthesis; biotin biosynthesis. Its function is as follows. Catalyzes the decarboxylative condensation of pimeloyl-[acyl-carrier protein] and L-alanine to produce 8-amino-7-oxononanoate (AON), [acyl-carrier protein], and carbon dioxide. This Pseudomonas aeruginosa (strain ATCC 15692 / DSM 22644 / CIP 104116 / JCM 14847 / LMG 12228 / 1C / PRS 101 / PAO1) protein is 8-amino-7-oxononanoate synthase.